A 132-amino-acid polypeptide reads, in one-letter code: Large ribosomal subunit protein uL22 (132 aa).

The protein belongs to the universal ribosomal protein uL22 family. Part of the 50S ribosomal subunit.

Functionally, this protein binds specifically to 23S rRNA; its binding is stimulated by other ribosomal proteins, e.g. L4, L17, and L20. It is important during the early stages of 50S assembly. It makes multiple contacts with different domains of the 23S rRNA in the assembled 50S subunit and ribosome. The globular domain of the protein is located near the polypeptide exit tunnel on the outside of the subunit, while an extended beta-hairpin is found that lines the wall of the exit tunnel in the center of the 70S ribosome. This Pelagibacter ubique (strain HTCC1062) protein is Large ribosomal subunit protein uL22.